The sequence spans 1037 residues: MVTINISNPVYFSDIKDVESEFLTSIPNGLTHEEAQNRLSEYGENRLEADSGVSAWKVLLRQVLNAMCVVLILAAALSFGTTDWIEGGVISAIIVLNITVGFIQEYKAEKTMDSLRTLASPMAHVTRSSKTDAIDSHLLVPGDVVVLKTGDVVPADLRLVETVNFETDEALLTGESLPVIKDAHATFQMNEDVPIGDRINLAYSSSIVTKGRAKGICYATGMQTQIGAIAAGLRQKGKLFQRPEKDEPNYRRKLNKYYLKVTSYYVQRVLGLNVGTPLQRKLTVLAYILFCIAIILAIIVMAAHSFHVTNEVSIYAISLGISIIPESLIAVLSITMAMGQKNMSKRRVIVRKLEALEALGGVTDICSDKTGTITQGKMITRRVWIPSYGYLSVDTSDANNPTIGTVSGLEAAMQDVLKEKKQEMKNIDPSNQPSDQFIPLLKTCALCNLSTVNQTETGEWVVKGEPTEIALHVFSKRFNYGKEDLLKTNTFVREYPFDSEIKRMAVIYEDQQGQYTVYAKGAVERILERCSTSNGSTLEEPDRELIIAQMETLAAEGLRVLALATKVIDKADNWETLPRDVAESSLEFVSLVGIYDPPRTESKGAVELCHRAGIRVHMLTGDHPETAKAIAREVGIIPPFISDRDPNMSWMVMTGSQFDALSDEEVDSLKALCLVIARCAPQTKVKMIEALHRRKAFVAMTGDGVNDSPSLKQANVGIAMGQNGSDVAKDASDIVLTDDNFSSIVNAIEEGRRMFDNIMRFVLHLLVSNVGEVILLVVGLAFRDEVHLSVFPMSPVEILWCNMITSSFPSMGLGMELAQPDVMERLPHDNKVGIFQKSLIVDMMVYGFFLGVVSLMTWVVIMYGFGTGNLSYDCNAHYHAGCNDVFKARSAVFAVVTFCILIMAVEVKNFDNSLFNLHGIPWGEWNFRYFLHTLVENKFLAWAIALAAVSVFPTIYIPVINRDVFKHTYIGWEWGVVAVAVMFYFFYVEIWKSIRRSLTNPQKKGKFRRTLSNTITTESKLSEKDLEHRLFLQSRRA.

The Cytoplasmic segment spans residues 1–61 (MVTINISNPV…GVSAWKVLLR (61 aa)). A helical transmembrane segment spans residues 62–82 (QVLNAMCVVLILAAALSFGTT). Asp-83 is a topological domain (extracellular). The chain crosses the membrane as a helical span at residues 84–104 (WIEGGVISAIIVLNITVGFIQ). Over 105 to 281 (EYKAEKTMDS…LNVGTPLQRK (177 aa)) the chain is Cytoplasmic. The helical transmembrane segment at 282-302 (LTVLAYILFCIAIILAIIVMA) threads the bilayer. At 303-313 (AHSFHVTNEVS) the chain is on the extracellular side. A helical membrane pass occupies residues 314 to 334 (IYAISLGISIIPESLIAVLSI). Topologically, residues 335 to 760 (TMAMGQKNMS…GRRMFDNIMR (426 aa)) are cytoplasmic. Asp-368 acts as the 4-aspartylphosphate intermediate in catalysis. 2 residues coordinate Mg(2+): Asp-368 and Thr-370. The ATP site is built by Thr-370, Glu-468, Lys-520, Arg-559, Thr-620, Gly-621, Asp-622, Arg-678, and Lys-684. Residue Asp-703 participates in Mg(2+) binding. Asn-706 contacts ATP. The chain crosses the membrane as a helical span at residues 761–781 (FVLHLLVSNVGEVILLVVGLA). The Extracellular segment spans residues 782–787 (FRDEVH). Residues 788–808 (LSVFPMSPVEILWCNMITSSF) form a helical membrane-spanning segment. The Cytoplasmic segment spans residues 809–844 (PSMGLGMELAQPDVMERLPHDNKVGIFQKSLIVDMM). A helical membrane pass occupies residues 845–865 (VYGFFLGVVSLMTWVVIMYGF). Over 866–889 (GTGNLSYDCNAHYHAGCNDVFKAR) the chain is Extracellular. Asn-869 carries an N-linked (GlcNAc...) asparagine glycan. Residues 890–910 (SAVFAVVTFCILIMAVEVKNF) form a helical membrane-spanning segment. The Cytoplasmic portion of the chain corresponds to 911–939 (DNSLFNLHGIPWGEWNFRYFLHTLVENKF). Residues 940-960 (LAWAIALAAVSVFPTIYIPVI) form a helical membrane-spanning segment. Residues 961–969 (NRDVFKHTY) are Extracellular-facing. Residues 970-990 (IGWEWGVVAVAVMFYFFYVEI) form a helical membrane-spanning segment. The Cytoplasmic portion of the chain corresponds to 991-1037 (WKSIRRSLTNPQKKGKFRRTLSNTITTESKLSEKDLEHRLFLQSRRA). Residue Ser-1012 is modified to Phosphoserine.

This sequence belongs to the cation transport ATPase (P-type) (TC 3.A.3) family. Type IID subfamily. Mg(2+) is required as a cofactor. The active site is phosphorylated in presence of sodium or potassium and in conditions of higher pH. Not phosphorylated in presence of calcium ions.

It localises to the cell membrane. It catalyses the reaction Na(+)(in) + ATP + H2O = Na(+)(out) + ADP + phosphate + H(+). The enzyme catalyses K(+)(in) + ATP + H2O = K(+)(out) + ADP + phosphate + H(+). Its function is as follows. Catalyzes the hydrolysis of ATP coupled with the export of sodium and potassium from the cell. May export sodium less efficiently. May transport other cations such as lithium. Sodium/potassium efflux ATPases are involved in salt tolerance and maintaining the membrane potential across the plasma membrane in high salinity (Na+) or alkaline (K+) environments. This chain is Sodium/potassium exporting P-type ATPase cta3, found in Schizosaccharomyces pombe (strain 972 / ATCC 24843) (Fission yeast).